Here is a 721-residue protein sequence, read N- to C-terminus: Ribonuclease R (721 aa).

In terms of domain architecture, RNB spans 249–587 (RRSIIDREII…VHRLLWMFIF (339 aa)). The 81-residue stretch at 639–719 (GKEFIGVVTT…LTRKIDFELV (81 aa)) folds into the S1 motif domain.

It belongs to the RNR ribonuclease family. RNase R subfamily.

It localises to the cytoplasm. The enzyme catalyses Exonucleolytic cleavage in the 3'- to 5'-direction to yield nucleoside 5'-phosphates.. Functionally, 3'-5' exoribonuclease that releases 5'-nucleoside monophosphates and is involved in maturation of structured RNAs. The chain is Ribonuclease R from Ureaplasma parvum serovar 3 (strain ATCC 700970).